A 90-amino-acid chain; its full sequence is Probable Fe(2+)-trafficking protein (90 aa).

The protein belongs to the Fe(2+)-trafficking protein family.

Functionally, could be a mediator in iron transactions between iron acquisition and iron-requiring processes, such as synthesis and/or repair of Fe-S clusters in biosynthetic enzymes. This Pseudomonas fluorescens (strain ATCC BAA-477 / NRRL B-23932 / Pf-5) protein is Probable Fe(2+)-trafficking protein.